The sequence spans 703 residues: Fatty acid oxidation complex subunit alpha (703 aa).

The enoyl-CoA hydratase stretch occupies residues Met-1–Pro-190. The tract at residues Ala-308 to Tyr-703 is 3-hydroxyacyl-CoA dehydrogenase.

This sequence in the N-terminal section; belongs to the enoyl-CoA hydratase/isomerase family. It in the central section; belongs to the 3-hydroxyacyl-CoA dehydrogenase family. As to quaternary structure, heterotetramer of two alpha chains (FadJ) and two beta chains (FadI).

Its subcellular location is the cytoplasm. The enzyme catalyses a (3S)-3-hydroxyacyl-CoA = a (2E)-enoyl-CoA + H2O. It carries out the reaction a 4-saturated-(3S)-3-hydroxyacyl-CoA = a (3E)-enoyl-CoA + H2O. The catalysed reaction is a (3S)-3-hydroxyacyl-CoA + NAD(+) = a 3-oxoacyl-CoA + NADH + H(+). It catalyses the reaction (3S)-3-hydroxybutanoyl-CoA = (3R)-3-hydroxybutanoyl-CoA. The protein operates within lipid metabolism; fatty acid beta-oxidation. Its function is as follows. Catalyzes the formation of a hydroxyacyl-CoA by addition of water on enoyl-CoA. Also exhibits 3-hydroxyacyl-CoA epimerase and 3-hydroxyacyl-CoA dehydrogenase activities. The sequence is that of Fatty acid oxidation complex subunit alpha from Vibrio parahaemolyticus serotype O3:K6 (strain RIMD 2210633).